The primary structure comprises 526 residues: MSTTVRPDEVSSILRKQLANFESEADVYDVGTVLQVGDGIARVYGLTKVAAGELLEFPNNVMGMALNLEEDNVGAVLFGESTMVKEGDTVKRSGILASIPVGEAMLGRVINPLGEPIDGKGPIDAKLRLPLERRAPGVIYRKSVHEPLQTGLKAIDAMIPVGRGQRELIIGDRQTGKTAVALDTIINQKGKGVFCIYVAIGLKGSTIAQVVSTLEKYDALSYTTVIAATASDPAPLQFIAPFAGATLGEYFRDTGRHALVIYDDLSKQAVSYRQVSLLLRRPPGREAYPGDVFYLHSRLLERAAKITDDVEVAKKMNDLPDALKPLVKGGGSLTALPIIETQAGDVSAYIPTNVISITDGQIFLESNLFNSGQRPAINVGISVSRVGGAAQIKAMKKIAGTLRLDLAQFRELEAFSKFGSDLDKTTKAQLDRGARLVEILKQGQYVPMPVEKQVAIIFVGTQGLLDSVDLKFIRKCEEEFLAMLEMKHADILSGIAEKGTLEADVASKLKDIATKFIATFKEKNKA.

Residue 171 to 178 (GDRQTGKT) coordinates ATP.

This sequence belongs to the ATPase alpha/beta chains family. F-type ATPases have 2 components, CF(1) - the catalytic core - and CF(0) - the membrane proton channel. CF(1) has five subunits: alpha(3), beta(3), gamma(1), delta(1), epsilon(1). CF(0) has four main subunits: a(1), b(1), b'(1) and c(9-12).

Its subcellular location is the cell inner membrane. It catalyses the reaction ATP + H2O + 4 H(+)(in) = ADP + phosphate + 5 H(+)(out). In terms of biological role, produces ATP from ADP in the presence of a proton gradient across the membrane. The alpha chain is a regulatory subunit. The chain is ATP synthase subunit alpha from Chlorobium chlorochromatii (strain CaD3).